The primary structure comprises 374 residues: Protein FAM199X (374 aa).

The interval 238 to 343 (YIREHSPRQR…QLKEQRQARK (106 aa)) is disordered. Residues 261–295 (SNGSTSGVSAHSSSNASMVSSTSSSTASTGSNSST) show a composition bias toward low complexity. The segment covering 315–334 (DSKKRSKQRKMQQKALRKRQ) has biased composition (basic residues). Positions 317-346 (KKRSKQRKMQQKALRKRQLKEQRQARKERL) form a coiled coil.

The protein belongs to the FAM199 family.

The protein is Protein FAM199X (fam199x) of Danio rerio (Zebrafish).